We begin with the raw amino-acid sequence, 313 residues long: Ribosomal RNA small subunit methyltransferase H (313 aa).

Residues 35 to 37 (GGH), Asp-55, Phe-79, Asp-100, and Gln-107 contribute to the S-adenosyl-L-methionine site.

The protein belongs to the methyltransferase superfamily. RsmH family.

The protein localises to the cytoplasm. The catalysed reaction is cytidine(1402) in 16S rRNA + S-adenosyl-L-methionine = N(4)-methylcytidine(1402) in 16S rRNA + S-adenosyl-L-homocysteine + H(+). Specifically methylates the N4 position of cytidine in position 1402 (C1402) of 16S rRNA. This is Ribosomal RNA small subunit methyltransferase H from Burkholderia vietnamiensis (strain G4 / LMG 22486) (Burkholderia cepacia (strain R1808)).